Consider the following 238-residue polypeptide: MAKKPTGKNTSGRGQRDLTVKVKTARGRRLSSTRWLQRQLNDPYVKRAQAEGYRGRAAFKIMELDDKYRFLVPGARVVDLGCAPGGWAQVAVPRINALGEKSGKAIGRFIGIDLQEVEPLAGAEFHQLDFMDEGADDQVKEWLGGQADVVMSDMAASSSGHKQTDHLRIMSLCETAAYFAFDVLEEGGTFVAKVLAGGAEGELQKLLKQKFKSVANVKPPSSRADSSEKFVVATGFRG.

S-adenosyl-L-methionine is bound by residues Gly85, Trp87, Asp113, Asp129, and Asp153. Lys193 functions as the Proton acceptor in the catalytic mechanism.

Belongs to the class I-like SAM-binding methyltransferase superfamily. RNA methyltransferase RlmE family.

It localises to the cytoplasm. It carries out the reaction uridine(2552) in 23S rRNA + S-adenosyl-L-methionine = 2'-O-methyluridine(2552) in 23S rRNA + S-adenosyl-L-homocysteine + H(+). Its function is as follows. Specifically methylates the uridine in position 2552 of 23S rRNA at the 2'-O position of the ribose in the fully assembled 50S ribosomal subunit. The chain is Ribosomal RNA large subunit methyltransferase E from Ruegeria sp. (strain TM1040) (Silicibacter sp.).